The primary structure comprises 264 residues: Virulence plasmid protein pGP3-D (264 aa).

The sequence is that of Virulence plasmid protein pGP3-D from Chlamydia muridarum (strain MoPn / Nigg).